We begin with the raw amino-acid sequence, 704 residues long: Protein arginine N-methyltransferase 7 (704 aa).

2 SAM-dependent MTase PRMT-type domains span residues 14–356 and 366–704; these read ENTW…YSLW and SQPA…EKSE.

It belongs to the class I-like SAM-binding methyltransferase superfamily. Protein arginine N-methyltransferase family. PRMT7 subfamily.

Its function is as follows. Essential arginine methyltransferase that can both catalyze the formation of omega-N monomethylarginine (MMA) and symmetrical dimethylarginine (sDMA). Specifically mediates the symmetrical dimethylation of arginine residues in the small nuclear ribonucleoproteins SmD1 and SmD3. The polypeptide is Protein arginine N-methyltransferase 7 (Art7) (Drosophila grimshawi (Hawaiian fruit fly)).